The sequence spans 275 residues: MIRIFNQKGKLYEGPIWAYNSLYFVDIPKGELHNLKEDGTHWAVKFPTYVSSLQPTKRGGIIVTAGNGFYLVKDKDQISLLYEVKDWDSRNRFNDGKCDQMGRYWIGTMNLEEKYPTGGLFVLDLDMKFRRVLTDVTISNGLAWSLDNKYLYYIDSPTRKIFKFKFDLERGDISQREVLIDLKEYEGVPDGMTIDSEGNLWVALYGGGAVLRIDVEKRKVIQELRLPAPRVTSVIFGGSNMDTLFITTANDHPDGGFVYSERVDVKGVETYYCGF.

This sequence belongs to the SMP-30/CGR1 family.

This is an uncharacterized protein from Sulfolobus acidocaldarius (strain ATCC 33909 / DSM 639 / JCM 8929 / NBRC 15157 / NCIMB 11770).